The sequence spans 242 residues: Ribonuclease PH (242 aa).

Phosphate is bound by residues Arg-87 and 125–127 (STR).

It belongs to the RNase PH family. In terms of assembly, homohexameric ring arranged as a trimer of dimers.

It carries out the reaction tRNA(n+1) + phosphate = tRNA(n) + a ribonucleoside 5'-diphosphate. Its function is as follows. Phosphorolytic 3'-5' exoribonuclease that plays an important role in tRNA 3'-end maturation. Removes nucleotide residues following the 3'-CCA terminus of tRNAs; can also add nucleotides to the ends of RNA molecules by using nucleoside diphosphates as substrates, but this may not be physiologically important. Probably plays a role in initiation of 16S rRNA degradation (leading to ribosome degradation) during starvation. The polypeptide is Ribonuclease PH (Synechococcus sp. (strain JA-3-3Ab) (Cyanobacteria bacterium Yellowstone A-Prime)).